The following is a 208-amino-acid chain: 3-demethoxyubiquinol 3-hydroxylase (208 aa).

The Fe cation site is built by Glu-57, Glu-87, His-90, Glu-139, Glu-171, and His-174.

The protein belongs to the COQ7 family. Fe cation is required as a cofactor.

The protein resides in the cell membrane. It carries out the reaction a 5-methoxy-2-methyl-3-(all-trans-polyprenyl)benzene-1,4-diol + AH2 + O2 = a 3-demethylubiquinol + A + H2O. It participates in cofactor biosynthesis; ubiquinone biosynthesis. Functionally, catalyzes the hydroxylation of 2-nonaprenyl-3-methyl-6-methoxy-1,4-benzoquinol during ubiquinone biosynthesis. In Nitrosomonas eutropha (strain DSM 101675 / C91 / Nm57), this protein is 3-demethoxyubiquinol 3-hydroxylase.